The sequence spans 466 residues: ATP synthase subunit beta (466 aa).

156–163 lines the ATP pocket; sequence GGAGVGKT.

It belongs to the ATPase alpha/beta chains family. In terms of assembly, F-type ATPases have 2 components, CF(1) - the catalytic core - and CF(0) - the membrane proton channel. CF(1) has five subunits: alpha(3), beta(3), gamma(1), delta(1), epsilon(1). CF(0) has three main subunits: a(1), b(2) and c(9-12). The alpha and beta chains form an alternating ring which encloses part of the gamma chain. CF(1) is attached to CF(0) by a central stalk formed by the gamma and epsilon chains, while a peripheral stalk is formed by the delta and b chains.

It is found in the cell inner membrane. It carries out the reaction ATP + H2O + 4 H(+)(in) = ADP + phosphate + 5 H(+)(out). Produces ATP from ADP in the presence of a proton gradient across the membrane. The catalytic sites are hosted primarily by the beta subunits. The chain is ATP synthase subunit beta from Polynucleobacter necessarius subsp. necessarius (strain STIR1).